Reading from the N-terminus, the 228-residue chain is 2,3-bisphosphoglycerate-dependent phosphoglycerate mutase (228 aa).

Substrate is bound by residues 8 to 15 (RHGQSEWN), 21 to 22 (TG), Arg60, 87 to 90 (ERHY), Lys98, 114 to 115 (RR), and 183 to 184 (GN). Residue His9 is the Tele-phosphohistidine intermediate of the active site. Residue Glu87 is the Proton donor/acceptor of the active site.

Belongs to the phosphoglycerate mutase family. BPG-dependent PGAM subfamily.

The catalysed reaction is (2R)-2-phosphoglycerate = (2R)-3-phosphoglycerate. The protein operates within carbohydrate degradation; glycolysis; pyruvate from D-glyceraldehyde 3-phosphate: step 3/5. Catalyzes the interconversion of 2-phosphoglycerate and 3-phosphoglycerate. This chain is 2,3-bisphosphoglycerate-dependent phosphoglycerate mutase, found in Staphylococcus epidermidis (strain ATCC 12228 / FDA PCI 1200).